The chain runs to 271 residues: Formamidopyrimidine-DNA glycosylase (271 aa).

Catalysis depends on Pro-2, which acts as the Schiff-base intermediate with DNA. Residue Glu-3 is the Proton donor of the active site. Catalysis depends on Lys-58, which acts as the Proton donor; for beta-elimination activity. Residues His-92, Arg-111, and Arg-152 each coordinate DNA. An FPG-type zinc finger spans residues Met-237–Arg-271. Arg-261 functions as the Proton donor; for delta-elimination activity in the catalytic mechanism.

The protein belongs to the FPG family. In terms of assembly, monomer. Zn(2+) is required as a cofactor.

The enzyme catalyses Hydrolysis of DNA containing ring-opened 7-methylguanine residues, releasing 2,6-diamino-4-hydroxy-5-(N-methyl)formamidopyrimidine.. It carries out the reaction 2'-deoxyribonucleotide-(2'-deoxyribose 5'-phosphate)-2'-deoxyribonucleotide-DNA = a 3'-end 2'-deoxyribonucleotide-(2,3-dehydro-2,3-deoxyribose 5'-phosphate)-DNA + a 5'-end 5'-phospho-2'-deoxyribonucleoside-DNA + H(+). Its function is as follows. Involved in base excision repair of DNA damaged by oxidation or by mutagenic agents. Acts as a DNA glycosylase that recognizes and removes damaged bases. Has a preference for oxidized purines, such as 7,8-dihydro-8-oxoguanine (8-oxoG). Has AP (apurinic/apyrimidinic) lyase activity and introduces nicks in the DNA strand. Cleaves the DNA backbone by beta-delta elimination to generate a single-strand break at the site of the removed base with both 3'- and 5'-phosphates. The protein is Formamidopyrimidine-DNA glycosylase of Xanthomonas campestris pv. campestris (strain ATCC 33913 / DSM 3586 / NCPPB 528 / LMG 568 / P 25).